A 205-amino-acid polypeptide reads, in one-letter code: GTP cyclohydrolase-2 (205 aa).

Residue 49–53 (RIHSE) participates in GTP binding. Cys54, Cys65, and Cys67 together coordinate Zn(2+). GTP contacts are provided by residues Gln70, 92–94 (EGR), and Thr114. The active-site Proton acceptor is Asp126. Arg128 serves as the catalytic Nucleophile. Positions 149 and 154 each coordinate GTP.

The protein belongs to the GTP cyclohydrolase II family. Zn(2+) serves as cofactor.

The catalysed reaction is GTP + 4 H2O = 2,5-diamino-6-hydroxy-4-(5-phosphoribosylamino)-pyrimidine + formate + 2 phosphate + 3 H(+). Its pathway is cofactor biosynthesis; riboflavin biosynthesis; 5-amino-6-(D-ribitylamino)uracil from GTP: step 1/4. Its function is as follows. Catalyzes the conversion of GTP to 2,5-diamino-6-ribosylamino-4(3H)-pyrimidinone 5'-phosphate (DARP), formate and pyrophosphate. This chain is GTP cyclohydrolase-2, found in Shewanella woodyi (strain ATCC 51908 / MS32).